The following is a 54-amino-acid chain: MLHYSVVFLVIALIAAIFGFGGIAAGAVEIAKILFFIFAIMAVVSFVMGLIKKN.

Transmembrane regions (helical) follow at residues 6–26 (VVFLVIALIAAIFGFGGIAAG) and 30–50 (IAKILFFIFAIMAVVSFVMGL).

The protein belongs to the UPF0391 family.

Its subcellular location is the cell membrane. The polypeptide is UPF0391 membrane protein Bpro_0879 (Polaromonas sp. (strain JS666 / ATCC BAA-500)).